Reading from the N-terminus, the 269-residue chain is Ribosomal RNA large subunit methyltransferase E (269 aa).

S-adenosyl-L-methionine contacts are provided by Gly-58, Trp-60, Asp-78, Asp-96, and Asp-120. Residue Lys-160 is the Proton acceptor of the active site. A disordered region spans residues 234-269 (HEKKEGNETSDNDEDNNKNGLMIKKIKELRGKRSKL). Residues 258 to 269 (KIKELRGKRSKL) are compositionally biased toward basic and acidic residues.

Belongs to the class I-like SAM-binding methyltransferase superfamily. RNA methyltransferase RlmE family.

The protein localises to the cytoplasm. It carries out the reaction uridine(2552) in 23S rRNA + S-adenosyl-L-methionine = 2'-O-methyluridine(2552) in 23S rRNA + S-adenosyl-L-homocysteine + H(+). Its function is as follows. Specifically methylates the uridine in position 2552 of 23S rRNA at the 2'-O position of the ribose in the fully assembled 50S ribosomal subunit. In Methanococcus aeolicus (strain ATCC BAA-1280 / DSM 17508 / OCM 812 / Nankai-3), this protein is Ribosomal RNA large subunit methyltransferase E.